The sequence spans 447 residues: Bifunctional protein GlmU (447 aa).

The interval 1 to 225 (MLTVAILAAG…NGELQGINNR (225 aa)) is pyrophosphorylase. UDP-N-acetyl-alpha-D-glucosamine is bound by residues 7–10 (LAAG), K21, Q73, and 78–79 (GT). D103 is a binding site for Mg(2+). UDP-N-acetyl-alpha-D-glucosamine is bound by residues G140, E154, N169, and N223. Residue N223 coordinates Mg(2+). A linker region spans residues 226-246 (VQLSKCEETIQNLIKEKHMLG). An N-acetyltransferase region spans residues 247–447 (GVTFINPASC…QVNIENWKKN (201 aa)). UDP-N-acetyl-alpha-D-glucosamine is bound by residues R328 and K346. H358 functions as the Proton acceptor in the catalytic mechanism. Residues Y361 and N372 each coordinate UDP-N-acetyl-alpha-D-glucosamine. Residues A375, A418, and R435 each contribute to the acetyl-CoA site.

In the N-terminal section; belongs to the N-acetylglucosamine-1-phosphate uridyltransferase family. It in the C-terminal section; belongs to the transferase hexapeptide repeat family. In terms of assembly, homotrimer. It depends on Mg(2+) as a cofactor.

The protein localises to the cytoplasm. It carries out the reaction alpha-D-glucosamine 1-phosphate + acetyl-CoA = N-acetyl-alpha-D-glucosamine 1-phosphate + CoA + H(+). The catalysed reaction is N-acetyl-alpha-D-glucosamine 1-phosphate + UTP + H(+) = UDP-N-acetyl-alpha-D-glucosamine + diphosphate. Its pathway is nucleotide-sugar biosynthesis; UDP-N-acetyl-alpha-D-glucosamine biosynthesis; N-acetyl-alpha-D-glucosamine 1-phosphate from alpha-D-glucosamine 6-phosphate (route II): step 2/2. The protein operates within nucleotide-sugar biosynthesis; UDP-N-acetyl-alpha-D-glucosamine biosynthesis; UDP-N-acetyl-alpha-D-glucosamine from N-acetyl-alpha-D-glucosamine 1-phosphate: step 1/1. It functions in the pathway bacterial outer membrane biogenesis; LPS lipid A biosynthesis. Catalyzes the last two sequential reactions in the de novo biosynthetic pathway for UDP-N-acetylglucosamine (UDP-GlcNAc). The C-terminal domain catalyzes the transfer of acetyl group from acetyl coenzyme A to glucosamine-1-phosphate (GlcN-1-P) to produce N-acetylglucosamine-1-phosphate (GlcNAc-1-P), which is converted into UDP-GlcNAc by the transfer of uridine 5-monophosphate (from uridine 5-triphosphate), a reaction catalyzed by the N-terminal domain. The protein is Bifunctional protein GlmU of Prochlorococcus marinus (strain MIT 9515).